The sequence spans 238 residues: Purine nucleoside phosphorylase DeoD-type (238 aa).

H4 contributes to the a purine D-ribonucleoside binding site. Phosphate-binding positions include G20, R24, R43, and 87 to 90 (RVGS). A purine D-ribonucleoside-binding positions include 179 to 181 (EME) and 203 to 204 (SD). D204 (proton donor) is an active-site residue.

This sequence belongs to the PNP/UDP phosphorylase family. Homohexamer; trimer of homodimers.

It catalyses the reaction a purine D-ribonucleoside + phosphate = a purine nucleobase + alpha-D-ribose 1-phosphate. It carries out the reaction a purine 2'-deoxy-D-ribonucleoside + phosphate = a purine nucleobase + 2-deoxy-alpha-D-ribose 1-phosphate. Its function is as follows. Catalyzes the reversible phosphorolytic breakdown of the N-glycosidic bond in the beta-(deoxy)ribonucleoside molecules, with the formation of the corresponding free purine bases and pentose-1-phosphate. The chain is Purine nucleoside phosphorylase DeoD-type from Histophilus somni (strain 129Pt) (Haemophilus somnus).